A 460-amino-acid chain; its full sequence is Cysteine--tRNA ligase (460 aa).

Cys28 contributes to the Zn(2+) binding site. The short motif at 30–40 (MTVYDYCHLGH) is the 'HIGH' region element. Zn(2+) contacts are provided by Cys209, His234, and Glu238. The 'KMSKS' region signature appears at 266–270 (KMSKS). ATP is bound at residue Lys269.

Belongs to the class-I aminoacyl-tRNA synthetase family. In terms of assembly, monomer. It depends on Zn(2+) as a cofactor.

It localises to the cytoplasm. The catalysed reaction is tRNA(Cys) + L-cysteine + ATP = L-cysteinyl-tRNA(Cys) + AMP + diphosphate. The chain is Cysteine--tRNA ligase from Pseudomonas fluorescens (strain Pf0-1).